A 670-amino-acid polypeptide reads, in one-letter code: Solute carrier organic anion transporter family member 1A5 (670 aa).

Over 1–20 the chain is Cytoplasmic; the sequence is MGETEKRIATHGVRCFSKIK. Residues 21–40 form a helical membrane-spanning segment; it reads MFLLALTCAYVSKSLSGIYM. Over 41 to 59 the chain is Extracellular; that stretch reads NSMLTQIERQFDIPTSIVG. A helical transmembrane segment spans residues 60–80; it reads LINGSFEIGNLLLIILVSYFG. At 81–86 the chain is on the cytoplasmic side; the sequence is TKLHRP. Residues 87 to 111 form a helical membrane-spanning segment; sequence IMIGIGCVIMGLGCFLMSLPHFLMG. The Extracellular portion of the chain corresponds to 112 to 155; it reads RYEYETTISPTSNLSSNSFLCMENRTQTLKPTQDPAECVKEMKS. N-linked (GlcNAc...) asparagine glycosylation is found at N124 and N135. Residues 156–184 traverse the membrane as a helical segment; it reads LMWIYVLVGNIIRGIGETPIMPLGISYIE. Residues 185–203 lie on the Cytoplasmic side of the membrane; it reads DFAKSENSPLYIGILESGK. A helical transmembrane segment spans residues 204 to 224; that stretch reads MIGPIVGLLLGSFCARIYVDT. Residues 225-242 are Extracellular-facing; it reads GSVNTDDLTITPTDTRWV. A helical transmembrane segment spans residues 243 to 267; sequence GAWWIGFLVCAGVNILTSIPFFFFP. At 268–311 the chain is on the cytoplasmic side; it reads KTLPKEGLQDNVARTENDKEEKHREKAKEENRGITKDFLPFMKS. A helical transmembrane segment spans residues 312–333; that stretch reads LSCNPIYMLLILTSVLQINAFI. Residues 334–353 lie on the Extracellular side of the membrane; sequence NMFTFLPKYLEQQYGKSTSE. The chain crosses the membrane as a helical span at residues 354–377; that stretch reads VVLLIGVCNLPPICIGYLLIGFIM. Over 378–381 the chain is Cytoplasmic; that stretch reads KKFR. A helical membrane pass occupies residues 382 to 405; it reads ITVKKAAYMAFCLSLFEYLLSYFH. The Extracellular portion of the chain corresponds to 406 to 513; that stretch reads FMISCDNFQV…PECANKLQYF (108 aa). The Kazal-like domain maps to 433–488; it reads NKVLADCNTRCSCLTNTWDPVCGDNGLSYMSACLAGCEKSVGMGTHMVFQNCSCIQ. Disulfide bonds link C439–C469, C445–C465, and C454–C486. N-linked (GlcNAc...) asparagine glycans are attached at residues N483 and N492. Residues 514-536 traverse the membrane as a helical segment; it reads LIMSVIGSFIYSITAIPGYMVLL. Residues 537–545 are Cytoplasmic-facing; the sequence is RCIKSEEKS. A helical transmembrane segment spans residues 546–571; it reads LGIGLHAFCTRIFAGIPAPIYFGALI. The Extracellular segment spans residues 572-605; the sequence is DRTCLHWGTLKCGEPGACRIYNINNFRRIYLVLP. A helical transmembrane segment spans residues 606–623; it reads AALRGSSYLPAFFILILM. The Cytoplasmic portion of the chain corresponds to 624–670; that stretch reads RKFQLPGEMYSSETELADMKQTVKKSECTDVHGIPKVENDGELKTKL.

It belongs to the organo anion transporter (TC 2.A.60) family. Expressed in brain, choroid plexus and lung, but not in liver or kidney.

Its subcellular location is the cell membrane. The protein resides in the basal cell membrane. The catalysed reaction is taurocholate(out) = taurocholate(in). The enzyme catalyses glycocholate(out) = glycocholate(in). It carries out the reaction taurochenodeoxycholate(out) = taurochenodeoxycholate(in). It catalyses the reaction tauroursodeoxycholate(out) = tauroursodeoxycholate(in). The catalysed reaction is 3,3',5'-triiodo-L-thyronine(out) = 3,3',5'-triiodo-L-thyronine(in). The enzyme catalyses L-thyroxine(out) = L-thyroxine(in). It carries out the reaction taurodeoxycholate(out) = taurodeoxycholate(in). It catalyses the reaction glycodeoxycholate(out) = glycodeoxycholate(in). The catalysed reaction is glycochenodeoxycholate(out) = glycochenodeoxycholate(in). The enzyme catalyses glycoursodeoxycholate(out) = glycoursodeoxycholate(in). It carries out the reaction estrone 3-sulfate(out) = estrone 3-sulfate(in). It catalyses the reaction prostaglandin E2(out) = prostaglandin E2(in). The catalysed reaction is substance P(out) = substance P(in). Functionally, na(+)-independent transporter that mediates the cellular uptake of a broad range of organic anions such as the endogenous bile salts cholate and deoxycholate, either in their unconjugated or conjugated forms (taurocholate and glycocholate), estrone 3-sulfate and prostaglandin E2, at the plasma membrane. Responsible for intestinal absorption of bile acids. Capable of thyroid hormone transport (both T3 or 3,3',5'-triiodo-L-thyronine, and T4 or L-tyroxine). Plays roles in blood-brain and -cerebrospinal fluid barrier transport of organic anions and signal mediators, and in hormone uptake by neural cells. May also play a role in the reuptake of neuropeptides such as substance P/TAC1 and vasoactive intestinal peptide/VIP released from retinal neurons. Shows a pH-sensitive substrate specificity which may be ascribed to the protonation state of the binding site and leads to a stimulation of substrate transport in an acidic microenvironment. Hydrogencarbonate/HCO3(-) acts as the probable counteranion that exchanges for organic anions. May contribute to regulate the transport of organic compounds in testis across the blood-testis-barrier. The polypeptide is Solute carrier organic anion transporter family member 1A5 (Slco1a5) (Mus musculus (Mouse)).